A 157-amino-acid chain; its full sequence is DNA gyrase inhibitor (157 aa).

This sequence belongs to the DNA gyrase inhibitor family. As to quaternary structure, interacts with DNA gyrase.

It localises to the cytoplasm. Functionally, inhibits the supercoiling activity of DNA gyrase. Acts by inhibiting DNA gyrase at an early step, prior to (or at the step of) binding of DNA by the gyrase. It protects cells against toxins that target DNA gyrase, by inhibiting activity of these toxins and reducing the formation of lethal double-strand breaks in the cell. The sequence is that of DNA gyrase inhibitor from Cronobacter turicensis (strain DSM 18703 / CCUG 55852 / LMG 23827 / z3032).